A 103-amino-acid chain; its full sequence is Gibberellin-regulated protein 13 (103 aa).

Positions 1-20 are cleaved as a signal peptide; sequence MATKLSIIVFSIVVLHLLLS.

This sequence belongs to the GASA family. Post-translationally, six disulfide bonds may be present.

The protein localises to the secreted. Gibberellin-regulated protein that may function in hormonal controlled steps of development such as seed germination, flowering and seed maturation. This Arabidopsis thaliana (Mouse-ear cress) protein is Gibberellin-regulated protein 13 (GASA13).